The chain runs to 402 residues: Serine--glyoxylate aminotransferase (402 aa).

N6-(pyridoxal phosphate)lysine is present on K201.

Belongs to the class-V pyridoxal-phosphate-dependent aminotransferase family. Pyridoxal 5'-phosphate serves as cofactor.

The enzyme catalyses glyoxylate + L-serine = 3-hydroxypyruvate + glycine. Its pathway is one-carbon metabolism; formaldehyde assimilation via serine pathway. The sequence is that of Serine--glyoxylate aminotransferase from Methylorubrum extorquens (strain ATCC 14718 / DSM 1338 / JCM 2805 / NCIMB 9133 / AM1) (Methylobacterium extorquens).